Here is a 78-residue protein sequence, read N- to C-terminus: D-alanyl carrier protein (78 aa).

A Carrier domain is found at 1 to 78 (MNIQETVLNI…QIIQQVEALQ (78 aa)). Position 36 is an O-(pantetheine 4'-phosphoryl)serine (Ser-36).

The protein belongs to the DltC family. Post-translationally, 4'-phosphopantetheine is transferred from CoA to a specific serine of apo-DCP.

Its subcellular location is the cytoplasm. It functions in the pathway cell wall biogenesis; lipoteichoic acid biosynthesis. In terms of biological role, carrier protein involved in the D-alanylation of lipoteichoic acid (LTA). The loading of thioester-linked D-alanine onto DltC is catalyzed by D-alanine--D-alanyl carrier protein ligase DltA. The DltC-carried D-alanyl group is further transferred to cell membrane phosphatidylglycerol (PG) by forming an ester bond, probably catalyzed by DltD. D-alanylation of LTA plays an important role in modulating the properties of the cell wall in Gram-positive bacteria, influencing the net charge of the cell wall. This chain is D-alanyl carrier protein, found in Enterococcus faecalis (strain ATCC 700802 / V583).